The chain runs to 158 residues: Cytosine deaminase (158 aa).

In terms of domain architecture, CMP/dCMP-type deaminase spans 9-129; the sequence is KWDQKGMDIA…KYLQTRGHEV (121 aa). Asn-51 is a substrate binding site. Position 62 (His-62) interacts with Zn(2+). Glu-64 (proton donor) is an active-site residue. Zn(2+) is bound by residues Cys-91 and Cys-94. Residue Asp-155 coordinates substrate.

It belongs to the cytidine and deoxycytidylate deaminase family. In terms of assembly, homodimer. Zn(2+) is required as a cofactor.

The protein resides in the cytoplasm. The protein localises to the nucleus. The enzyme catalyses cytosine + H2O + H(+) = uracil + NH4(+). It participates in pyrimidine metabolism; UMP biosynthesis via salvage pathway; uracil from cytosine: step 1/1. In terms of biological role, catalyzes the hydrolytic deamination of cytosine to uracil or 5-methylcytosine to thymine. Is involved in the pyrimidine salvage pathway, which allows the cell to utilize cytosine for pyrimidine nucleotide synthesis. This Saccharomyces cerevisiae (strain ATCC 204508 / S288c) (Baker's yeast) protein is Cytosine deaminase.